The primary structure comprises 344 residues: Oxygen sensor histidine kinase NreB (344 aa).

[4Fe-4S] cluster-binding residues include C58, C61, C73, and C76. One can recognise a Histidine kinase domain in the interval E147–I344. The residue at position 158 (H158) is a Phosphohistidine; by autocatalysis.

Requires [4Fe-4S] cluster as cofactor. Post-translationally, autophosphorylated.

It localises to the cytoplasm. The enzyme catalyses ATP + protein L-histidine = ADP + protein N-phospho-L-histidine.. Its function is as follows. Member of the two-component regulatory system NreB/NreC involved in the control of dissimilatory nitrate/nitrite reduction in response to oxygen. NreB functions as a direct oxygen sensor histidine kinase which is autophosphorylated, in the absence of oxygen, probably at the conserved histidine residue, and transfers its phosphate group probably to a conserved aspartate residue of NreC. NreB/NreC activates the expression of the nitrate (narGHJI) and nitrite (nir) reductase operons, as well as the putative nitrate transporter gene narT. This is Oxygen sensor histidine kinase NreB (nreB) from Staphylococcus epidermidis (strain ATCC 35984 / DSM 28319 / BCRC 17069 / CCUG 31568 / BM 3577 / RP62A).